The primary structure comprises 268 residues: Protein c-ets-1-B (268 aa).

Positions F131–A139 are helix HI-1. Positions A150–T157 are helix HI-2. The ETS DNA-binding region spans I162–V242. The helix H4 stretch occupies residues L245 to L249. Positions P253–M259 are helix H5.

The protein belongs to the ETS family. Binds DNA as a homodimer; homodimerization is required for transcription activation.

It localises to the nucleus. The protein localises to the cytoplasm. Autoinhibited by a module composed of four alpha helices (HI-1, HI-2, H4, and H5) that flank the DNA-binding ETS domain, reducing the affinity for DNA. In terms of biological role, transcription factor. Directly controls the expression of cytokine and chemokine genes in a wide variety of different cellular contexts. The polypeptide is Protein c-ets-1-B (ets1-b) (Xenopus laevis (African clawed frog)).